A 497-amino-acid polypeptide reads, in one-letter code: O-acetyltransferase PaAT-1 (497 aa).

A glycan (N-linked (GlcNAc...) asparagine) is linked at N35. 9 consecutive transmembrane segments (helical) span residues 69-89 (GISA…GWHI), 107-127 (LLIS…YSLS), 157-177 (LFVP…LNWY), 241-261 (LWTL…LMAF), 278-298 (VLFQ…GMLI), 329-349 (AIGV…HLAF), 375-395 (PIAA…QVLF), 406-426 (ISFA…HALG), and 443-463 (VAIS…ADFV).

Belongs to the acyltransferase 3 family.

Its subcellular location is the membrane. It participates in mycotoxin biosynthesis. Its function is as follows. O-acetyltransferase; part of the 2 gene clusters that mediate the biosynthesis of fusicoccins, diterpene glucosides that display phytohormone-like activity and function as potent activators of plasma membrane H(+)-ATPases in plants by modifying 14-3-3 proteins and cause the plant disease constriction canker. The first step in the pathway is performed by the fusicoccadiene synthase PaFS that possesses both prenyl transferase and terpene cyclase activity, converting isopentenyl diphosphate and dimethylallyl diphosphate into geranylgeranyl diphosphate (GGDP) and successively converting GGDP into fusicocca-2,10(14)-diene, a precursor for fusicoccin H. The second step is the oxidation at the C-8 position by the cytochrome P450 monooxygenase PaP450-2 to yield fusicocca-2,10(14)-diene-8-beta-ol. The cytochrome P450 monooxygenase PaP450-1 then catalyzes the hydroxylation at the C-16 position to produce fusicocca-2,10(14)-diene-8-beta,16-diol. The dioxygenase fc-dox then catalyzes the 16-oxydation of fusicocca-2,10(14)-diene-8-beta,16-diol to yield an aldehyde (8-beta-hydroxyfusicocca-1,10(14)-dien-16-al). The short-chain dehydrogenase/reductase fc-sdr catalyzes the reduction of the aldehyde to yield fusicocca-1,10(14)-diene-8-beta,16-diol. The next step is the hydroxylation at C-9 performed by the cytochrome P450 monooxygenase PaP450-3 that leads to fusicoccin H aglycon which is glycosylated to fusicoccin H by the O-glycosyltransferase PaGT. Hydroxylation at C-12 by the cytochrome P450 monooxygenase PaP450-4 leads then to the production of fusicoccin Q and is followed by methylation by the O-methyltransferase PaMT to yield fusicoccin P. Fusicoccin P is further converted to fusicoccin J via prenylation by the O-glucose prenyltransferase PaPT. Cytochrome P450 monooxygenase PaP450-5 then performs hydroxylation at C-19 to yield dideacetyl-fusicoccin A which is acetylated to 3'-O-deacetyl-fusicoccin A by the O-acetyltransferase PaAT-2. Finally, a another acetylation by the O-acetyltransferase PaAT-1 yields fusicoccin A. This chain is O-acetyltransferase PaAT-1, found in Phomopsis amygdali (Fusicoccum amygdali).